Reading from the N-terminus, the 120-residue chain is NAD(P)H-quinone oxidoreductase subunit 3 (120 aa).

The next 3 helical transmembrane spans lie at 6-26 (GYDAFLGFLLISAAVPALALV), 64-84 (MFALVFVIFDVETVFLYPWAV), and 89-109 (LGLLAFIEALIFISILIVALA).

It belongs to the complex I subunit 3 family. As to quaternary structure, NDH-1 can be composed of about 15 different subunits; different subcomplexes with different compositions have been identified which probably have different functions.

Its subcellular location is the cellular thylakoid membrane. It carries out the reaction a plastoquinone + NADH + (n+1) H(+)(in) = a plastoquinol + NAD(+) + n H(+)(out). The enzyme catalyses a plastoquinone + NADPH + (n+1) H(+)(in) = a plastoquinol + NADP(+) + n H(+)(out). Functionally, NDH-1 shuttles electrons from an unknown electron donor, via FMN and iron-sulfur (Fe-S) centers, to quinones in the respiratory and/or the photosynthetic chain. The immediate electron acceptor for the enzyme in this species is believed to be plastoquinone. Couples the redox reaction to proton translocation, and thus conserves the redox energy in a proton gradient. Cyanobacterial NDH-1 also plays a role in inorganic carbon-concentration. The protein is NAD(P)H-quinone oxidoreductase subunit 3 of Prochlorococcus marinus (strain SARG / CCMP1375 / SS120).